The sequence spans 679 residues: Glycine--tRNA ligase beta subunit (679 aa).

It belongs to the class-II aminoacyl-tRNA synthetase family. Tetramer of two alpha and two beta subunits.

It is found in the cytoplasm. It carries out the reaction tRNA(Gly) + glycine + ATP = glycyl-tRNA(Gly) + AMP + diphosphate. The polypeptide is Glycine--tRNA ligase beta subunit (Streptococcus pyogenes serotype M6 (strain ATCC BAA-946 / MGAS10394)).